The following is a 620-amino-acid chain: Probable potassium transport system protein Kup (620 aa).

The next 12 helical transmembrane spans lie at 8 to 28 (VGLL…SPLY), 50 to 70 (VLSL…VILI), 102 to 122 (MLLG…TPAI), 136 to 156 (PDLK…LFAI), 168 to 188 (FGPV…ANIV), 211 to 231 (LMSF…EALY), 246 to 266 (WFSL…ALLI), 284 to 304 (MVMP…QAVI), 336 to 356 (IYVP…VIGF), 368 to 388 (IAVT…MALL), 393 to 413 (MALV…YFAA), and 415 to 435 (IIKV…SFTV).

Belongs to the HAK/KUP transporter (TC 2.A.72) family.

The protein resides in the cell inner membrane. The catalysed reaction is K(+)(in) + H(+)(in) = K(+)(out) + H(+)(out). Functionally, transport of potassium into the cell. Likely operates as a K(+):H(+) symporter. The protein is Probable potassium transport system protein Kup of Rhodopseudomonas palustris (strain HaA2).